We begin with the raw amino-acid sequence, 185 residues long: Alkyl hydroperoxide reductase AhpD (185 aa).

Catalysis depends on Cys131, which acts as the Proton donor. Cys131 and Cys134 are disulfide-bonded. Cys134 (cysteine sulfenic acid (-SOH) intermediate) is an active-site residue.

This sequence belongs to the AhpD family. Homotrimer.

It catalyses the reaction N(6)-[(R)-dihydrolipoyl]-L-lysyl-[lipoyl-carrier protein] + a hydroperoxide = N(6)-[(R)-lipoyl]-L-lysyl-[lipoyl-carrier protein] + an alcohol + H2O. Its function is as follows. Antioxidant protein with alkyl hydroperoxidase activity. Required for the reduction of the AhpC active site cysteine residues and for the regeneration of the AhpC enzyme activity. This Frankia alni (strain DSM 45986 / CECT 9034 / ACN14a) protein is Alkyl hydroperoxide reductase AhpD.